Here is a 316-residue protein sequence, read N- to C-terminus: Lipooligosaccharide heptosyltransferase 2 (316 aa).

The protein belongs to the glycosyltransferase 9 family.

It carries out the reaction an L-alpha-D-Hep-(1-&gt;5)-[alpha-Kdo-(2-&gt;4)]-alpha-Kdo-(2-&gt;6)-lipid A + ADP-L-glycero-beta-D-manno-heptose = an L-alpha-D-Hep-(1-&gt;3)-L-alpha-D-Hep-(1-&gt;5)-[alpha-Kdo-(2-&gt;4)]-alpha-Kdo-(2-&gt;6)-lipid A + ADP + H(+). It participates in bacterial outer membrane biogenesis; LOS core biosynthesis. Glycosyltransferase involved in the biosynthesis of the core oligosaccharide region of lipooligosaccharide (LOS). Catalyzes the addition of the second heptose unit to the heptosyl-Kdo2-lipid A module. This is Lipooligosaccharide heptosyltransferase 2 from Campylobacter jejuni subsp. jejuni serotype O:6 (strain 81116 / NCTC 11828).